The sequence spans 318 residues: Ferrochelatase (318 aa).

Positions 186 and 264 each coordinate Fe cation.

Belongs to the ferrochelatase family.

The protein resides in the cytoplasm. The catalysed reaction is heme b + 2 H(+) = protoporphyrin IX + Fe(2+). It participates in porphyrin-containing compound metabolism; protoheme biosynthesis; protoheme from protoporphyrin-IX: step 1/1. Its function is as follows. Catalyzes the ferrous insertion into protoporphyrin IX. The polypeptide is Ferrochelatase (Chlamydia felis (strain Fe/C-56) (Chlamydophila felis)).